The chain runs to 1096 residues: Serine/threonine-protein kinase mig-15 (1096 aa).

In terms of domain architecture, Protein kinase spans 21-288; the sequence is FELIEVVGNG…TGALLRHPFI (268 aa). ATP contacts are provided by residues 27–35 and K50; that span reads VGNGTYGQV. The Proton acceptor role is filled by D151. Residues 293-315 are compositionally biased toward basic and acidic residues; sequence HEQTIRHSIKEHIDRNRRVKKDD. Disordered regions lie at residues 293-351, 380-492, 517-545, and 574-664; these read HEQT…MIPM, LPQQ…QQSR, KMGG…EASI, and NGEG…DLLP. The segment covering 316–328 has biased composition (acidic residues); sequence ADYEYSGSEDDEP. Residues 380–393 are compositionally biased toward low complexity; sequence LPQQPAPAPFQYQQ. Composition is skewed to basic and acidic residues over residues 397–408 and 453–472; these read VEPRRESSEVKL and NYEK…ERQA. The segment covering 532-541 has biased composition (pro residues); it reads SPPPPAPPPR. The span at 629-642 shows a compositional bias: acidic residues; it reads LDDDDSDSDNEEGN. A CNH domain is found at 778–1070; sequence SGEILCAALW…KFLCERNDKV (293 aa).

Belongs to the protein kinase superfamily. STE Ser/Thr protein kinase family. STE20 subfamily.

It catalyses the reaction L-seryl-[protein] + ATP = O-phospho-L-seryl-[protein] + ADP + H(+). It carries out the reaction L-threonyl-[protein] + ATP = O-phospho-L-threonyl-[protein] + ADP + H(+). Involved in cell migration and signal transduction. Important in several developmental processes including epidermal development, Q neuroblast migrations and muscle arm targeting. Required with ina-1/pat-3 to stabilize the commissural axons growth cone along a precise direction and are required for the cell to respond appropriately when signaling in the growth cone must change. During gonad morphogenesis, involved in distal tip cell (DTC) migration from the dorsal side of the hermaphrodite body to the midbody to allow for formation of gonad arms. The protein is Serine/threonine-protein kinase mig-15 (mig-15) of Caenorhabditis elegans.